We begin with the raw amino-acid sequence, 123 residues long: Small ribosomal subunit protein uS12 (123 aa).

Residue Asp89 is modified to 3-methylthioaspartic acid.

The protein belongs to the universal ribosomal protein uS12 family. Part of the 30S ribosomal subunit. Contacts proteins S8 and S17. May interact with IF1 in the 30S initiation complex.

Its function is as follows. With S4 and S5 plays an important role in translational accuracy. Functionally, interacts with and stabilizes bases of the 16S rRNA that are involved in tRNA selection in the A site and with the mRNA backbone. Located at the interface of the 30S and 50S subunits, it traverses the body of the 30S subunit contacting proteins on the other side and probably holding the rRNA structure together. The combined cluster of proteins S8, S12 and S17 appears to hold together the shoulder and platform of the 30S subunit. This chain is Small ribosomal subunit protein uS12, found in Geobacter metallireducens (strain ATCC 53774 / DSM 7210 / GS-15).